Reading from the N-terminus, the 517-residue chain is Tyrosine-protein kinase Src42A (517 aa).

Residues 1–47 (MGNCLTTQKGEPDKPADRIKLDDPPTIGVGVGVPQIPMPSHAGQPPE) are disordered. Residues 10–23 (GEPDKPADRIKLDD) show a composition bias toward basic and acidic residues. One can recognise an SH3 domain in the interval 63 to 124 (ANAKIFVALY…PSNYVAKLKS (62 aa)). One can recognise an SH2 domain in the interval 130 to 222 (WYFRKIKRIE…GLCVNLCKPC (93 aa)). The Protein kinase domain occupies 248-504 (LKFVRKLGSG…TLQWKLEDFY (257 aa)). ATP contacts are provided by residues 254–262 (LGSGQFGDV) and Lys-276. Asp-370 acts as the Proton acceptor in catalysis.

It belongs to the protein kinase superfamily. Tyr protein kinase family. SRC subfamily. As to expression, ubiquitous in early embryos, in stages 13-16 expression is seen in visceral mesoderm, hindgut, brain, anal pads and ventral ganglions. In larvae, expression is in CNS, wing disk, leg disk and photoreceptor precursors in the eye-antenna disks posterior to the morphogenetic furrow.

It carries out the reaction L-tyrosyl-[protein] + ATP = O-phospho-L-tyrosyl-[protein] + ADP + H(+). Functionally, required directly or indirectly for the phosphorylation of drpr which is necessary for the interaction of drpr with shark and subsequent glial phagocytic activity. Together with drpr and shark, promotes the migration of macrophages to sites of wounding as part of a signaling cascade where Src42A detects production of hydrogen peroxide at wound sites which triggers phosphorylation of drpr and subsequent recruitment and activation of shark. Essential for correct eye morphogenesis (ommatidial R7 neuron formation) which requires the Ras1/MAPK signal transduction pathway. May be involved in the regulation of cytoskeleton organization and cell-cell contacts in developing ommatidia. Involved in phosphorylation of Dscam1, a cell surface receptor involved in targeting of growing axons during eye morphogenesis, and its interaction partner the SH2/SH3 adapter protein dock/dreadlocks. During embryogenesis, involved in regulation of dorsal closure where it may have a role in activating the JNK pathway in leading edge cells during this process. The sequence is that of Tyrosine-protein kinase Src42A from Drosophila melanogaster (Fruit fly).